The sequence spans 439 residues: uncharacterized protein (439 aa).

One can recognise a DAGKc domain in the interval 65-208 (TRPKRVFVLV…VYAFELTTEG (144 aa)).

This is an uncharacterized protein from Caenorhabditis elegans.